We begin with the raw amino-acid sequence, 90 residues long: UPF0729 protein Bm1_03610 (90 aa).

The protein belongs to the UPF0729 family.

The chain is UPF0729 protein Bm1_03610 from Brugia malayi (Filarial nematode worm).